The sequence spans 262 residues: Probable cutinase 1 (262 aa).

The signal sequence occupies residues 1–19 (MAPLKSLLLGASLATLALS). 2 disulfide bridges follow: cysteine 48–cysteine 127 and cysteine 74–cysteine 88. The active-site Nucleophile is serine 138. Residues cysteine 189 and cysteine 196 are joined by a disulfide bond. Aspartate 193 is a catalytic residue. Histidine 206 serves as the catalytic Proton donor/acceptor. The tract at residues 228-262 (SSSTTSSSSDAASSSSAAGTSSSGLSGLSSFFGGL) is disordered.

The protein belongs to the cutinase family.

It localises to the secreted. The enzyme catalyses cutin + H2O = cutin monomers.. In terms of biological role, catalyzes the hydrolysis of complex carboxylic polyesters found in the cell wall of plants. Degrades cutin, a macromolecule that forms the structure of the plant cuticle. The polypeptide is Probable cutinase 1 (Aspergillus niger (strain ATCC MYA-4892 / CBS 513.88 / FGSC A1513)).